Reading from the N-terminus, the 207-residue chain is Recombination protein RecR (207 aa).

The C4-type zinc-finger motif lies at 62–77 (CSRCNTFTEQDVCETC). Positions 85–184 (SVLCVVETPA…KVSRLARGVP (100 aa)) constitute a Toprim domain.

This sequence belongs to the RecR family.

Its function is as follows. May play a role in DNA repair. It seems to be involved in an RecBC-independent recombinational process of DNA repair. It may act with RecF and RecO. The sequence is that of Recombination protein RecR from Ralstonia nicotianae (strain ATCC BAA-1114 / GMI1000) (Ralstonia solanacearum).